We begin with the raw amino-acid sequence, 400 residues long: Phosphoglycerate kinase (400 aa).

Substrate-binding positions include 23 to 25, R38, 61 to 64, R120, and R153; these read DLN and HFGR. ATP contacts are provided by residues K203, E325, and 355–358; that span reads GGDT.

The protein belongs to the phosphoglycerate kinase family. Monomer.

Its subcellular location is the cytoplasm. It catalyses the reaction (2R)-3-phosphoglycerate + ATP = (2R)-3-phospho-glyceroyl phosphate + ADP. It participates in carbohydrate degradation; glycolysis; pyruvate from D-glyceraldehyde 3-phosphate: step 2/5. This Methylorubrum populi (strain ATCC BAA-705 / NCIMB 13946 / BJ001) (Methylobacterium populi) protein is Phosphoglycerate kinase.